The sequence spans 217 residues: TPA-induced transmembrane protein (217 aa).

Residues M1–S37 are disordered. The helical transmembrane segment at L66 to C86 threads the bilayer.

In terms of assembly, interacts with LIPH. Detected predominantly in the skin, with strongest expression in the inner root sheath of the hair follicle.

It is found in the endoplasmic reticulum. The protein resides in the cell membrane. In terms of biological role, has a role in LIPH-mediated synthesis of 2-acyl lysophosphatidic acid (LPA). LPA is a bioactive lipid mediator involved in different biological processes, and necessary to promote hair formation and growth. This chain is TPA-induced transmembrane protein (TTMP), found in Homo sapiens (Human).